The sequence spans 300 residues: Mycothiol acetyltransferase (300 aa).

2 N-acetyltransferase domains span residues 4 to 140 and 151 to 300; these read IDWR…RPLT and VRLA…AVAD. Residue D36 coordinates 1D-myo-inositol 2-(L-cysteinylamino)-2-deoxy-alpha-D-glucopyranoside. 79–81 is an acetyl-CoA binding site; the sequence is LVV. The 1D-myo-inositol 2-(L-cysteinylamino)-2-deoxy-alpha-D-glucopyranoside site is built by E178, K219, and E227. 231–233 is a binding site for acetyl-CoA; sequence VGV. Residue Y269 participates in 1D-myo-inositol 2-(L-cysteinylamino)-2-deoxy-alpha-D-glucopyranoside binding. An acetyl-CoA-binding site is contributed by 274-279; sequence NGAAVK.

Belongs to the acetyltransferase family. MshD subfamily. In terms of assembly, monomer.

It catalyses the reaction 1D-myo-inositol 2-(L-cysteinylamino)-2-deoxy-alpha-D-glucopyranoside + acetyl-CoA = mycothiol + CoA + H(+). In terms of biological role, catalyzes the transfer of acetyl from acetyl-CoA to desacetylmycothiol (Cys-GlcN-Ins) to form mycothiol. The chain is Mycothiol acetyltransferase from Mycobacterium sp. (strain JLS).